A 187-amino-acid polypeptide reads, in one-letter code: Transmembrane protein 11-A, mitochondrial (187 aa).

The next 2 helical transmembrane spans lie at 79 to 95 (TAVL…LALP) and 102 to 119 (VSLP…LYGI).

Belongs to the TMEM11 family.

Its subcellular location is the mitochondrion inner membrane. Plays a role in mitochondrial morphogenesis. The protein is Transmembrane protein 11-A, mitochondrial (tmem11-a) of Xenopus laevis (African clawed frog).